Reading from the N-terminus, the 276-residue chain is Large ribosomal subunit protein uL2c (276 aa).

A disordered region spans residues 221–276; sequence RGSVMNPVDHPHGGGEGRAPIGRSRPVTPWGKPALGQKTRKPKKQSNKLILRKRKK. Residues 258-276 show a composition bias toward basic residues; sequence KTRKPKKQSNKLILRKRKK.

The protein belongs to the universal ribosomal protein uL2 family. In terms of assembly, part of the 50S ribosomal subunit.

The protein resides in the plastid. The protein localises to the chloroplast. This chain is Large ribosomal subunit protein uL2c (rpl2), found in Stigeoclonium helveticum (Green alga).